The chain runs to 88 residues: Large ribosomal subunit protein bL27 (88 aa).

The segment at 1-26 is disordered; sequence MAHKKGTGSTRNGRDSNSKRLGVKAY.

It belongs to the bacterial ribosomal protein bL27 family.

The chain is Large ribosomal subunit protein bL27 from Prochlorococcus marinus (strain MIT 9211).